The chain runs to 678 residues: Glycine--tRNA ligase beta subunit (678 aa).

It belongs to the class-II aminoacyl-tRNA synthetase family. Tetramer of two alpha and two beta subunits.

The protein localises to the cytoplasm. The enzyme catalyses tRNA(Gly) + glycine + ATP = glycyl-tRNA(Gly) + AMP + diphosphate. The polypeptide is Glycine--tRNA ligase beta subunit (Streptococcus pneumoniae (strain 70585)).